Consider the following 316-residue polypeptide: Adenine deaminase (316 aa).

The Zn(2+) site is built by H14, H16, and H194. Catalysis depends on E197, which acts as the Proton donor. A Zn(2+)-binding site is contributed by D275. D276 provides a ligand contact to substrate.

The protein belongs to the metallo-dependent hydrolases superfamily. Adenosine and AMP deaminases family. Adenine deaminase type 2 subfamily. Requires Zn(2+) as cofactor.

It catalyses the reaction adenine + H2O + H(+) = hypoxanthine + NH4(+). Functionally, catalyzes the hydrolytic deamination of adenine to hypoxanthine. Plays an important role in the purine salvage pathway and in nitrogen catabolism. The polypeptide is Adenine deaminase (Pseudomonas entomophila (strain L48)).